A 72-amino-acid polypeptide reads, in one-letter code: Translation initiation factor IF-1 (72 aa).

The S1-like domain occupies 1–72; the sequence is MAKDDVIEID…DKGRITYRYK (72 aa).

Belongs to the IF-1 family. As to quaternary structure, component of the 30S ribosomal translation pre-initiation complex which assembles on the 30S ribosome in the order IF-2 and IF-3, IF-1 and N-formylmethionyl-tRNA(fMet); mRNA recruitment can occur at any time during PIC assembly.

The protein resides in the cytoplasm. Functionally, one of the essential components for the initiation of protein synthesis. Stabilizes the binding of IF-2 and IF-3 on the 30S subunit to which N-formylmethionyl-tRNA(fMet) subsequently binds. Helps modulate mRNA selection, yielding the 30S pre-initiation complex (PIC). Upon addition of the 50S ribosomal subunit IF-1, IF-2 and IF-3 are released leaving the mature 70S translation initiation complex. This is Translation initiation factor IF-1 from Campylobacter curvus (strain 525.92).